Consider the following 514-residue polypeptide: MSTFIRGPICGTDNCPSRLWRIIDGRRTCQYGHVMEGDVEFNDDEDDLNGLGAGVITRRLNLTTNATGSFQSSQLTNSQLLQQQQRQSHKKFKKLIGHEAKLLFLKSFQFILKRQIRWLITEMRFPKEFEHVAKIIWLKILKTINDQPQEELKLQLHMTSTISILYLASTHLSLPVYTCDYIKWICTAKMPYFQASEILPKSWRIQLPNYYVSILEGSISPFNGQLYNKIALTCGMIHFKEFFNSEISCQGLLLKLVMQCALPPEFYFYTKQVIEFEETDIRNLTLWERTDERHTGRVSNHAELRVLSYFMLTINWMLSFDRDRQYPLKWILSLTESLTQRTTTSESIGRNIVKVVYPDKPTSSDYFQWSEEETLEFLKWMEKQFLPTQTKSLHNENGSMEMTIDQKIARRKLYKIFPLDREANHDGEFNDSTHQLTFIEDLQERYAKQTPFFESNKIRDSLNYQEANPPARKEAIGRLLTHIASQLLVDFAISKEQLKDCISRIKNACLHRMN.

Residues 3–36 (TFIRGPICGTDNCPSRLWRIIDGRRTCQYGHVME) form an RRN7-type zinc finger. Zn(2+) contacts are provided by Cys10, Cys15, Cys29, and His33. A B-reader region spans residues 37–66 (GDVEFNDDEDDLNGLGAGVITRRLNLTTNA). The segment at 67–101 (TGSFQSSQLTNSQLLQQQQRQSHKKFKKLIGHEAK) is B-linker. Positions 102 to 210 (LLFLKSFQFI…KSWRIQLPNY (109 aa)) are N-terminal cyclin fold. The segment at 211 to 320 (YVSILEGSIS…MLTINWMLSF (110 aa)) is C-terminal cyclin fold.

This sequence belongs to the RRN7/TAF1B family. Component of the core factor (CF) complex, which consists of RRN6, RRN7 and RRN11. The CF heterotrimer may further dimerize to form a hexamer. RRN7 interacts with RRN6, RRN11, SPT15 and RRN9.

The protein resides in the nucleus. Its subcellular location is the nucleolus. Component of RNA polymerase I core factor complex (CF) that acts as a SUA7/TFIIB-like factor and plays a key role in multiple steps during transcription initiation such as pre-initiation complex (PIC) assembly and postpolymerase recruitment events in polymerase I (Pol I) transcription. Binds rDNA promoters and plays a role in Pol I recruitment. After binding of UAF (upstream activation factor) to an upstream element of the promoter, CF is recruited in a SPT15/TBP-dependent manner to form a pre-initiation complex. The sequence is that of RNA polymerase I-specific transcription initiation factor RRN7 (RRN7) from Saccharomyces cerevisiae (strain ATCC 204508 / S288c) (Baker's yeast).